A 30-amino-acid polypeptide reads, in one-letter code: Trypsin inhibitor 1 (30 aa).

Cystine bridges form between C4–C21, C11–C23, and C17–C29.

The protein belongs to the protease inhibitor I7 (squash-type serine protease inhibitor) family.

The protein localises to the secreted. Functionally, inhibits trypsin. This chain is Trypsin inhibitor 1, found in Citrullus lanatus (Watermelon).